We begin with the raw amino-acid sequence, 83 residues long: Consomatin Rs1 (83 aa).

The signal sequence occupies residues 1–22 (MQTAYWVMVMMMVWITAPLSEG). The propeptide occupies 23–55 (GKLNNVIRGLVPDDVTPKRISQSLISRRRFDSR). A disulfide bridge links Cys-62 with Cys-67. Trp-64 carries the D-tryptophan modification. Pro-68 is modified (4-hydroxyproline). Positions 71-83 (LHGDNYDLKEKDK) are excised as a propeptide.

It belongs to the conotoxin C superfamily. Consomatin family. As to expression, expressed by the venom duct.

It localises to the secreted. Its function is as follows. Moderately activates human somatostatin receptors (SSTR) with a preferential activation of SSTR1 and SSTR4. In vivo, does not cause behavioral changes in mice within a few minutes of intracranial injection, but causes a progressive loss of movement thereafter. Four to five hours after injection, mice recover, even with the highest dose tested. Shows antinociception and antihyperalgesia activities in two mouse models of acute pain, most probably by acting outside the central nervous system. This is Consomatin Rs1 from Conus raulsilvai (Sea snail).